A 298-amino-acid chain; its full sequence is Acetylglutamate kinase (298 aa).

Substrate-binding positions include 64–65, Arg86, and Asn195; that span reads GG.

The protein belongs to the acetylglutamate kinase family. ArgB subfamily.

The protein localises to the cytoplasm. The enzyme catalyses N-acetyl-L-glutamate + ATP = N-acetyl-L-glutamyl 5-phosphate + ADP. It functions in the pathway amino-acid biosynthesis; L-arginine biosynthesis; N(2)-acetyl-L-ornithine from L-glutamate: step 2/4. Functionally, catalyzes the ATP-dependent phosphorylation of N-acetyl-L-glutamate. The chain is Acetylglutamate kinase from Aquifex aeolicus (strain VF5).